The following is a 252-amino-acid chain: Serine/threonine phosphatase stp (252 aa).

Positions 1-18 are enriched in basic and acidic residues; sequence MHAEFRTDRGRIRHHNED. Residues 1–23 are disordered; it reads MHAEFRTDRGRIRHHNEDNGGVF. The 241-residue stretch at 2-242 folds into the PPM-type phosphatase domain; sequence HAEFRTDRGR…DNITVLLVER (241 aa). Residues D36, G37, D194, and D233 each coordinate Mn(2+).

This sequence belongs to the PP2C family. Mn(2+) is required as a cofactor.

The protein resides in the cytoplasm. Its subcellular location is the membrane. It catalyses the reaction O-phospho-L-seryl-[protein] + H2O = L-seryl-[protein] + phosphate. It carries out the reaction O-phospho-L-threonyl-[protein] + H2O = L-threonyl-[protein] + phosphate. With respect to regulation, activity not affected by inhibitors of phosphatases of the PPP family such as okadaic acid and cypermethrin, or by inhibitors of phosphatases of the PTP family such as sodium orthovanadate. In terms of biological role, protein phosphatase that dephosphorylates EF-Tu. In Listeria monocytogenes serovar 1/2a (strain ATCC BAA-679 / EGD-e), this protein is Serine/threonine phosphatase stp (stp).